A 289-amino-acid polypeptide reads, in one-letter code: MKVLVNNHLVEREDATVDIEDRGYQFGDGVYEVVRLYNGKFFTYNEHIDRLYASAAKIDLVIPYSKEELRALLEKLVAENNINTGNVYLQVTRGVQNPRNHVMPDDFPLEGVLTAAAREVPRNEQQFVQGGPVITEEDVRWLRCDIKSLNLLGNILAKNKAHQQNALEAVLHRGEQVTECSASNISIIKDGVLWTHAADNLILNGITRQVIIAVAKKNGIPVKEADFTLTDLREADEVFISSTTIEITPVTHIDGVQVADGKRGPITAKLHQYFVEEIVQACGELEFAK.

Tyrosine 31 serves as a coordination point for substrate. Arginine 50 is a binding site for pyridoxal 5'-phosphate. Residues arginine 99 and histidine 101 each contribute to the substrate site. The active-site Proton acceptor is lysine 147. N6-(pyridoxal phosphate)lysine is present on lysine 147. Glutamate 179 lines the pyridoxal 5'-phosphate pocket.

This sequence belongs to the class-IV pyridoxal-phosphate-dependent aminotransferase family. Homodimer. It depends on pyridoxal 5'-phosphate as a cofactor.

The catalysed reaction is D-alanine + 2-oxoglutarate = D-glutamate + pyruvate. Functionally, acts on the D-isomers of alanine, leucine, aspartate, glutamate, aminobutyrate, norvaline and asparagine. The enzyme transfers an amino group from a substrate D-amino acid to the pyridoxal phosphate cofactor to form pyridoxamine and an alpha-keto acid in the first half-reaction. The second half-reaction is the reverse of the first, transferring the amino group from the pyridoxamine to a second alpha-keto acid to form the product D-amino acid via a ping-pong mechanism. This is an important process in the formation of D-alanine and D-glutamate, which are essential bacterial cell wall components. This is D-alanine aminotransferase (dat) from Listeria monocytogenes serotype 4b (strain F2365).